Here is a 193-residue protein sequence, read N- to C-terminus: Ribosome hibernation promotion factor (193 aa).

This sequence belongs to the HPF/YfiA ribosome-associated protein family. Long HPF subfamily. Interacts with 100S ribosomes.

It localises to the cytoplasm. Might modulate either transcription and/or translation. Functionally, required for dimerization of active 70S ribosomes into 100S ribosomes in stationary phase; 100S ribosomes are translationally inactive and sometimes present during exponential growth. This chain is Ribosome hibernation promotion factor, found in Picosynechococcus sp. (strain ATCC 27264 / PCC 7002 / PR-6) (Agmenellum quadruplicatum).